A 495-amino-acid polypeptide reads, in one-letter code: Cysteine--tRNA ligase (495 aa).

C35 provides a ligand contact to Zn(2+). A 'HIGH' region motif is present at residues 37–47 (PTVYSNVHLGN). Positions 230, 255, and 259 each coordinate Zn(2+). A 'KMSKS' region motif is present at residues 287–291 (KMSKS). K290 lines the ATP pocket.

Belongs to the class-I aminoacyl-tRNA synthetase family. In terms of assembly, monomer. Zn(2+) is required as a cofactor.

It localises to the cytoplasm. The enzyme catalyses tRNA(Cys) + L-cysteine + ATP = L-cysteinyl-tRNA(Cys) + AMP + diphosphate. In Flavobacterium psychrophilum (strain ATCC 49511 / DSM 21280 / CIP 103535 / JIP02/86), this protein is Cysteine--tRNA ligase.